Consider the following 301-residue polypeptide: Putative S-adenosyl-L-methionine-dependent methyltransferase MMAR_4850 (301 aa).

Residues Asp127 and 156-157 (DL) contribute to the S-adenosyl-L-methionine site.

The protein belongs to the UPF0677 family.

Functionally, exhibits S-adenosyl-L-methionine-dependent methyltransferase activity. The polypeptide is Putative S-adenosyl-L-methionine-dependent methyltransferase MMAR_4850 (Mycobacterium marinum (strain ATCC BAA-535 / M)).